Here is a 65-residue protein sequence, read N- to C-terminus: Large ribosomal subunit protein uL29 (65 aa).

The protein belongs to the universal ribosomal protein uL29 family.

This Mycoplasmopsis synoviae (strain 53) (Mycoplasma synoviae) protein is Large ribosomal subunit protein uL29.